Reading from the N-terminus, the 315-residue chain is Zinc transport protein ZntB (315 aa).

The Cytoplasmic portion of the chain corresponds to 1 to 250 (MGFMIEHWDF…RDEKTNKNSY (250 aa)). The helical transmembrane segment at 251–271 (LFTLVATIFLPTSFLTGLLGI) threads the bilayer. The Periplasmic portion of the chain corresponds to 272-282 (NIGGMPGVESS). Residues 283-303 (MAFTWFCIALIVIFGLEWLLF) traverse the membrane as a helical segment. Residues 304–315 (KRLGFTNKTDDE) are Cytoplasmic-facing.

It belongs to the CorA metal ion transporter (MIT) (TC 1.A.35) family. In terms of assembly, homopentamer. Can assemble pentamers in the absence of the transmembrane regions.

It is found in the cell inner membrane. It catalyses the reaction Zn(2+)(out) + H(+)(out) = Zn(2+)(in) + H(+)(in). In terms of biological role, zinc transporter. Acts as a Zn(2+):proton symporter, which likely mediates zinc ion uptake. The polypeptide is Zinc transport protein ZntB (Vibrio parahaemolyticus serotype O3:K6 (strain RIMD 2210633)).